The chain runs to 90 residues: UPF0297 protein OEOE_1166 (90 aa).

Belongs to the UPF0297 family.

This is UPF0297 protein OEOE_1166 from Oenococcus oeni (strain ATCC BAA-331 / PSU-1).